Reading from the N-terminus, the 89-residue chain is Large ribosomal subunit protein bL27 (89 aa).

A disordered region spans residues 1 to 21 (MAHKKSGGSSRNGRDSNPKYL).

Belongs to the bacterial ribosomal protein bL27 family.

The protein is Large ribosomal subunit protein bL27 of Hyphomonas neptunium (strain ATCC 15444).